Here is a 444-residue protein sequence, read N- to C-terminus: Aflatoxin biosynthesis regulatory protein (444 aa).

The interval 1 to 25 (MVDHISPRASPGPIRSSQTRRARKL) is disordered. The segment at residues 29–56 (CTSCASSKVRCTKEKPACARCIERGLAC) is a DNA-binding region (zn(2)-C6 fungal-type). The segment at 64–174 (MGRNPRAPSP…AGQEQSTLSS (111 aa)) is disordered. Basic residues predominate over residues 106 to 116 (TQAHTHAHSHP). The span at 120-130 (PQSHPQSNQPP) shows a compositional bias: low complexity. The segment covering 136–149 (PNGSSSVSAIFSHQ) has biased composition (polar residues).

In terms of assembly, interacts with aflS.

Its subcellular location is the nucleus. Transcription factor; part of the gene cluster that mediates the biosynthesis of aflatoxin, a polyketide-derived furanocoumarin which is part of the most toxic and carcinogenic compounds among the known mycotoxins. Binds to at least 17 genes in the aflatoxin biosynthetic cluster, leading to the activation of an enzymatic cascade reaction that results in aflatoxin biosynthesis. Promoter regions of several biosynthesis genes are bound by aflR in a dimeric form with a 5'-TCG(N5)CGA-3' binding motif. AflR also recognizes 5'-TTAGGCCTAA-3' and 5'-TCGCAGCCCGG-3' binding sequences. AflR achieves its binding specificity through a mechanism in which either two copies of aflR or its complex with aflS bind to target sites on DNA in a highly cooperative manner. AflS acts as a modulator of aflR's DNA-binding by decreasing its DNA-binding affinity. In addition to aflatoxin biosynthesis, also plays a positive role in the fungal growth, spore germination, sclerotial development, and carbohydrate metabolism. This chain is Aflatoxin biosynthesis regulatory protein, found in Aspergillus flavus (strain ATCC 200026 / FGSC A1120 / IAM 13836 / NRRL 3357 / JCM 12722 / SRRC 167).